Reading from the N-terminus, the 228-residue chain is Cytochrome b5 domain-containing protein 1 (228 aa).

Residues 17–83 enclose the Cytochrome b5 heme-binding domain; the sequence is RRYFTPAEVA…DPKTRDIRKH (67 aa). 2 residues coordinate heme: Y52 and H83.

It belongs to the cytochrome b5 family.

Its subcellular location is the cytoplasm. The protein resides in the cytoskeleton. It localises to the cilium axoneme. Radial spoke stalk protein that binds heme under oxidizing conditions. Required for the coordinated beating of multiple cilia maybe by functioning in a redox signaling pathway. The polypeptide is Cytochrome b5 domain-containing protein 1 (Homo sapiens (Human)).